Reading from the N-terminus, the 167-residue chain is Troponin C-akin-1 protein (167 aa).

Tyr-17–Leu-20 lines the substrate pocket. Glu-92 functions as the Proton acceptor in the catalytic mechanism.

It belongs to the gamma-glutamylcyclotransferase family. In embryos, expression is seen in heart cells of the dorsal vessel and hindgut visceral mesoderm.

In terms of biological role, putative gamma-glutamylcyclotransferase. The polypeptide is Troponin C-akin-1 protein (Tina-1) (Drosophila melanogaster (Fruit fly)).